Reading from the N-terminus, the 124-residue chain is Large ribosomal subunit protein bL19 (124 aa).

This sequence belongs to the bacterial ribosomal protein bL19 family.

Its function is as follows. This protein is located at the 30S-50S ribosomal subunit interface and may play a role in the structure and function of the aminoacyl-tRNA binding site. In Zymomonas mobilis subsp. mobilis (strain ATCC 31821 / ZM4 / CP4), this protein is Large ribosomal subunit protein bL19.